We begin with the raw amino-acid sequence, 448 residues long: Putative F-box/LRR-repeat protein At3g44810 (448 aa).

The region spanning 6 to 54 is the F-box domain; sequence TASLNCLPDELLVHVLSSLETKQAASTSVLSKRWRTLFAVRRNLDFDDS. 6 LRR repeats span residues 117 to 141, 143 to 165, 190 to 213, 228 to 251, 290 to 313, and 421 to 443; these read VSEL…VFRS, TLVK…TCLP, CPAL…VSSK, FDWF…TYAR, VRNV…CKGG, and IVDS…SSRL.

The sequence is that of Putative F-box/LRR-repeat protein At3g44810 from Arabidopsis thaliana (Mouse-ear cress).